The chain runs to 777 residues: Dynamin-like protein ARC5 (777 aa).

Residues 45–343 enclose the Dynamin-type G domain; the sequence is PFEAPAVLVV…LWKRYKESVP (299 aa). Positions 55 to 62 are G1 motif; the sequence is GQQTDGKS. 55 to 62 contributes to the GTP binding site; that stretch reads GQQTDGKS. A G2 motif region spans residues 81-83; sequence KTR. The G3 motif stretch occupies residues 160–163; it reads DTPG. GTP is bound by residues 160–164 and 231–234; these read DTPGL and TKLD. Residues 231–234 form a G4 motif region; sequence TKLD. The G5 motif stretch occupies residues 265–268; that stretch reads SPFF. Coiled-coil stretches lie at residues 300–320 and 728–765; these read EDIA…EKSR and NLRQ…NSHE.

It belongs to the TRAFAC class dynamin-like GTPase superfamily. Dynamin/Fzo/YdjA family. In terms of assembly, forms a homodimer and heterodimers with DRP3A and DRP3B on peroxisomes. Also interacts with FIS1A (but not FIS1B) and PEX11 proteins (PEX11A, PEX11B, PEX11C, PEX11D and PEX11E) on peroxisomes. Interacts with PDV1 and PDV2. Post-translationally, stabilized at the plastid outer envelope membranes (OEMs) in the constriction site when in complex with GTP, but destabilized after conversion of GTP into GDP leading to turnover with a cytosolic pool.

The protein resides in the cytoplasm. The protein localises to the plastid. It localises to the chloroplast outer membrane. It is found in the peroxisome. Its subcellular location is the cytosol. The catalysed reaction is GTP + H2O = GDP + phosphate + H(+). Its activity is regulated as follows. GTPase activity is repressed by PDV2 thus increasing stability at the plastid outer envelope membranes (OEMs) periphery. Functionally, mechanochemical GTPase component of both plastid and peroxisome division machinery. Required for the last steps of plastid division specifically in mesophyll-cell, when the narrow isthmus breaks, facilitating the separation of the daughter plastids. Necessary for peroxisome activities. Seems to influence stromule (stroma-filled tubular extensions of the plastid envelope membrane) length and frequency. This Arabidopsis thaliana (Mouse-ear cress) protein is Dynamin-like protein ARC5.